A 403-amino-acid polypeptide reads, in one-letter code: 8-amino-7-oxononanoate synthase (403 aa).

Position 25 (Arg25) interacts with substrate. 112–113 (GY) is a pyridoxal 5'-phosphate binding site. His137 serves as a coordination point for substrate. The pyridoxal 5'-phosphate site is built by Ser182, His210, and Thr239. Residue Lys242 is modified to N6-(pyridoxal phosphate)lysine. Substrate is bound at residue Thr358.

The protein belongs to the class-II pyridoxal-phosphate-dependent aminotransferase family. BioF subfamily. In terms of assembly, homodimer. It depends on pyridoxal 5'-phosphate as a cofactor.

It catalyses the reaction 6-carboxyhexanoyl-[ACP] + L-alanine + H(+) = (8S)-8-amino-7-oxononanoate + holo-[ACP] + CO2. It participates in cofactor biosynthesis; biotin biosynthesis. Its function is as follows. Catalyzes the decarboxylative condensation of pimeloyl-[acyl-carrier protein] and L-alanine to produce 8-amino-7-oxononanoate (AON), [acyl-carrier protein], and carbon dioxide. In Marinomonas sp. (strain MWYL1), this protein is 8-amino-7-oxononanoate synthase.